A 904-amino-acid polypeptide reads, in one-letter code: Thiamine diphosphate dependent-3-acetyloctanal synthase PigD (904 aa).

The disordered stretch occupies residues 879–904; the sequence is RKAWAAQQPESTSTAFDQDPTQEATS. The segment covering 886–904 has biased composition (polar residues); sequence QPESTSTAFDQDPTQEATS.

The protein belongs to the TPP enzyme family. Thiamine diphosphate serves as cofactor.

The catalysed reaction is (2E)-octenal + pyruvate + H(+) = (S)-3-acetyloctanal + CO2. It participates in antibiotic biosynthesis; prodigiosin biosynthesis. In terms of biological role, involved in the biosynthesis of 2-methyl-3-n-amyl-pyrrole (MAP), one of the terminal products involved in the biosynthesis of the red antibiotic prodigiosin (Pig). Catalyzes the decarboxylation of pyruvate, followed by the modification of the resulting two-carbon fragment acetaldehyde at the C3 position of the 2-octenal (1,2-addition of acetaldehyde) giving 3-acetyloctanal. In vitro, it can act on a number of alpha,beta-unsaturated carbonyl compounds, including aldehydes and ketones, and can catalyze both 1,2-addition and Stetter-type 1,4-addition depending on the substrate. This is Thiamine diphosphate dependent-3-acetyloctanal synthase PigD from Serratia marcescens.